The sequence spans 128 residues: Small ribosomal subunit protein eS8 (128 aa).

The protein belongs to the eukaryotic ribosomal protein eS8 family. As to quaternary structure, part of the 30S ribosomal subunit.

This Metallosphaera sedula (strain ATCC 51363 / DSM 5348 / JCM 9185 / NBRC 15509 / TH2) protein is Small ribosomal subunit protein eS8.